Consider the following 111-residue polypeptide: Nucleoid-associated protein PSEEN1789 (111 aa).

Disordered regions lie at residues 1–25 and 89–111; these read MMKGGMAGLMKQAQQMQEKMQKMQE and NSQDKMGSMTAGMQLPPGFKMPF.

This sequence belongs to the YbaB/EbfC family. As to quaternary structure, homodimer.

The protein localises to the cytoplasm. Its subcellular location is the nucleoid. In terms of biological role, binds to DNA and alters its conformation. May be involved in regulation of gene expression, nucleoid organization and DNA protection. The sequence is that of Nucleoid-associated protein PSEEN1789 from Pseudomonas entomophila (strain L48).